A 179-amino-acid polypeptide reads, in one-letter code: tRNA (cytidine(56)-2'-O)-methyltransferase (179 aa).

Residues Leu82, 112–116, and 130–137 each bind S-adenosyl-L-methionine; these read GAEKV and VGNQPHSE.

It belongs to the aTrm56 family. Homodimer.

Its subcellular location is the cytoplasm. It carries out the reaction cytidine(56) in tRNA + S-adenosyl-L-methionine = 2'-O-methylcytidine(56) in tRNA + S-adenosyl-L-homocysteine + H(+). Functionally, specifically catalyzes the AdoMet-dependent 2'-O-ribose methylation of cytidine at position 56 in tRNAs. The sequence is that of tRNA (cytidine(56)-2'-O)-methyltransferase from Methanococcus maripaludis (strain C7 / ATCC BAA-1331).